A 152-amino-acid polypeptide reads, in one-letter code: Ribosomal RNA large subunit methyltransferase H (152 aa).

S-adenosyl-L-methionine contacts are provided by residues leucine 69, glycine 96, and phenylalanine 118–phenylalanine 123.

It belongs to the RNA methyltransferase RlmH family. Homodimer.

Its subcellular location is the cytoplasm. The enzyme catalyses pseudouridine(1915) in 23S rRNA + S-adenosyl-L-methionine = N(3)-methylpseudouridine(1915) in 23S rRNA + S-adenosyl-L-homocysteine + H(+). Its function is as follows. Specifically methylates the pseudouridine at position 1915 (m3Psi1915) in 23S rRNA. This is Ribosomal RNA large subunit methyltransferase H from Mesomycoplasma hyopneumoniae (strain 7448) (Mycoplasma hyopneumoniae).